Reading from the N-terminus, the 908-residue chain is AdoMet-dependent rRNA methyltransferase SPB1 (908 aa).

Positions 57, 59, 77, 93, and 118 each coordinate S-adenosyl-L-methionine. Lysine 158 (proton acceptor) is an active-site residue. A coiled-coil region spans residues 378-422 (MDEEEQITEELQKLQQAKLAKTKRERKRANEKKARELLKLQLNMT). Disordered regions lie at residues 440–513 (IFDL…YDSY), 535–715 (NFDA…DEVK), and 806–841 (AKGR…EKAR). Residues 464-493 (DDGEGMDLASESEEEEDEDEEDDEVLDSDE) are compositionally biased toward acidic residues. The span at 535-545 (NFDAWHGIQEK) shows a compositional bias: basic and acidic residues. Acidic residues-rich tracts occupy residues 546 to 564 (SDEE…EEGG) and 579 to 591 (DSSD…EPET). Basic and acidic residues predominate over residues 592–610 (EVPKKIKKVSFEKPARSEK). 2 stretches are compositionally biased toward acidic residues: residues 650–678 (DGDD…EDAS) and 685–712 (EGDD…EDQD). A compositionally biased stretch (basic and acidic residues) spans 816 to 827 (ARMEKAKKKADG).

This sequence belongs to the class I-like SAM-binding methyltransferase superfamily. RNA methyltransferase RlmE family. SPB1 subfamily. Component of the nucleolar and nucleoplasmic pre-60S ribosomal particle.

It is found in the nucleus. The protein resides in the nucleolus. The enzyme catalyses a ribonucleotide in rRNA + S-adenosyl-L-methionine = a 2'-O-methylribonucleotide in rRNA + S-adenosyl-L-homocysteine + H(+). Its function is as follows. Required for proper assembly of pre-ribosomal particles during the biogenesis of the 60S ribosomal subunit. The protein is AdoMet-dependent rRNA methyltransferase SPB1 of Cryptococcus neoformans var. neoformans serotype D (strain B-3501A) (Filobasidiella neoformans).